A 165-amino-acid polypeptide reads, in one-letter code: MALNLQDKQAIVAEVSEVAKGALSAVVADSRGVTVDKMTELRKAGREAGVYMRVVRNTLLRRAVEGTPFECLKDAFVGPTLIAYSMEHPGAAARLFKEFAKANAKFEVKAAAFEGELIPASQIDRLATLPTYEEAIARLMATMKEASAGKLVRTLAAVRDAKEAA.

N6-acetyllysine occurs at positions 37 and 105.

The protein belongs to the universal ribosomal protein uL10 family. Part of the ribosomal stalk of the 50S ribosomal subunit. The N-terminus interacts with L11 and the large rRNA to form the base of the stalk. The C-terminus forms an elongated spine to which L12 dimers bind in a sequential fashion forming a multimeric L10(L12)X complex.

In terms of biological role, protein L10 is also a translational repressor protein. It controls the translation of the rplJL-rpoBC operon by binding to its mRNA. Forms part of the ribosomal stalk, playing a central role in the interaction of the ribosome with GTP-bound translation factors. The chain is Large ribosomal subunit protein uL10 (rplJ) from Escherichia coli O6:H1 (strain CFT073 / ATCC 700928 / UPEC).